The sequence spans 81 residues: Large ribosomal subunit protein bL31B (81 aa).

This sequence belongs to the bacterial ribosomal protein bL31 family. Type B subfamily. As to quaternary structure, part of the 50S ribosomal subunit.

This is Large ribosomal subunit protein bL31B from Bacillus cereus (strain ATCC 10987 / NRS 248).